Consider the following 209-residue polypeptide: Uridine kinase (209 aa).

Residue 12–19 (GGSGGGKT) coordinates ATP.

This sequence belongs to the uridine kinase family.

Its subcellular location is the cytoplasm. The catalysed reaction is uridine + ATP = UMP + ADP + H(+). It catalyses the reaction cytidine + ATP = CMP + ADP + H(+). The protein operates within pyrimidine metabolism; CTP biosynthesis via salvage pathway; CTP from cytidine: step 1/3. Its pathway is pyrimidine metabolism; UMP biosynthesis via salvage pathway; UMP from uridine: step 1/1. This is Uridine kinase from Streptococcus agalactiae serotype III (strain NEM316).